The sequence spans 247 residues: Uridylate kinase (247 aa).

18 to 21 is an ATP binding site; it reads KLSG. G60 is a UMP binding site. ATP contacts are provided by G61 and R65. UMP is bound by residues D80 and 141 to 148; that span reads TGNPFFTT. Residues T168, Y174, and D177 each contribute to the ATP site.

This sequence belongs to the UMP kinase family. In terms of assembly, homohexamer.

The protein resides in the cytoplasm. The enzyme catalyses UMP + ATP = UDP + ADP. It functions in the pathway pyrimidine metabolism; CTP biosynthesis via de novo pathway; UDP from UMP (UMPK route): step 1/1. Inhibited by UTP. Functionally, catalyzes the reversible phosphorylation of UMP to UDP. This Ectopseudomonas mendocina (strain ymp) (Pseudomonas mendocina) protein is Uridylate kinase.